The chain runs to 255 residues: Small ribosomal subunit protein uS2 (255 aa).

This sequence belongs to the universal ribosomal protein uS2 family.

The protein is Small ribosomal subunit protein uS2 of Streptococcus pyogenes serotype M3 (strain ATCC BAA-595 / MGAS315).